The following is a 498-amino-acid chain: MRTNPTTSRPGVSTSEEKSTGRIDQIIGPVLDVTFPPGKLPYIYNALVVQSRDTADKQINVTCEVQQLLGNNRVRAVAMSATDGLMRGMEVIDTGAPLSVPVGGATLGRIFNVLGEPVDNLGPVDSSATFPIHRSAPAFIELDTKLSIFETGIKVVDLLAPYRRGGKIGLFGGAGVGKTVLIMELINNIAKAHGGVSVFGGVGERTREGNDLYMEMKESGVINEKNIEESKVALVYGQMNEPPGARMRVGLTALTMAEYFRDVNKQDVLLFIDNIFRFVQAGSEVSALLGRMPSAVGYQPTLSTEMGSLQERIASTKKGSITSIQAVYVPADDLTDPAPATTFAHLDATTVLSRGLASKGIYPAVDPLDSTSTMLQPRIVGNEHYETAQRVKETLQRYKELQDIIAILGLDELSEEDRLTVARARKIERFLSQPFFVAEVFTGSPGKYVALAETIRGFQLILSGELDGLPEQAFYLVGNIDEASTKAITLEEENKSQK.

A compositionally biased stretch (polar residues) spans 1-14 (MRTNPTTSRPGVST). The interval 1-20 (MRTNPTTSRPGVSTSEEKST) is disordered. ATP is bound at residue 172–179 (GGAGVGKT).

Belongs to the ATPase alpha/beta chains family. As to quaternary structure, F-type ATPases have 2 components, CF(1) - the catalytic core - and CF(0) - the membrane proton channel. CF(1) has five subunits: alpha(3), beta(3), gamma(1), delta(1), epsilon(1). CF(0) has four main subunits: a(1), b(1), b'(1) and c(9-12).

Its subcellular location is the plastid. It localises to the chloroplast thylakoid membrane. The enzyme catalyses ATP + H2O + 4 H(+)(in) = ADP + phosphate + 5 H(+)(out). Produces ATP from ADP in the presence of a proton gradient across the membrane. The catalytic sites are hosted primarily by the beta subunits. The polypeptide is ATP synthase subunit beta, chloroplastic (Hordeum vulgare (Barley)).